The primary structure comprises 84 residues: Large ribosomal subunit protein uL23 (84 aa).

The protein belongs to the universal ribosomal protein uL23 family. As to quaternary structure, part of the 50S ribosomal subunit. Contacts protein L29.

Its function is as follows. Binds to 23S rRNA. One of the proteins that surrounds the polypeptide exit tunnel on the outside of the ribosome. In Halobacterium salinarum (strain ATCC 700922 / JCM 11081 / NRC-1) (Halobacterium halobium), this protein is Large ribosomal subunit protein uL23.